The primary structure comprises 224 residues: LexA repressor (224 aa).

A DNA-binding region (H-T-H motif) is located at residues 31–51 (RAEIAAELGFKSANAAEEHLQ). Active-site for autocatalytic cleavage activity residues include S142 and K179.

This sequence belongs to the peptidase S24 family. As to quaternary structure, homodimer.

The enzyme catalyses Hydrolysis of Ala-|-Gly bond in repressor LexA.. Its function is as follows. Represses a number of genes involved in the response to DNA damage (SOS response), including recA and lexA. In the presence of single-stranded DNA, RecA interacts with LexA causing an autocatalytic cleavage which disrupts the DNA-binding part of LexA, leading to derepression of the SOS regulon and eventually DNA repair. The polypeptide is LexA repressor (Verminephrobacter eiseniae (strain EF01-2)).